A 138-amino-acid polypeptide reads, in one-letter code: Ribosomal RNA large subunit methyltransferase H (138 aa).

S-adenosyl-L-methionine contacts are provided by residues leucine 57, glycine 86, and 105–110; that span reads LSPLTF.

Belongs to the RNA methyltransferase RlmH family. In terms of assembly, homodimer.

It is found in the cytoplasm. It catalyses the reaction pseudouridine(1915) in 23S rRNA + S-adenosyl-L-methionine = N(3)-methylpseudouridine(1915) in 23S rRNA + S-adenosyl-L-homocysteine + H(+). Specifically methylates the pseudouridine at position 1915 (m3Psi1915) in 23S rRNA. The sequence is that of Ribosomal RNA large subunit methyltransferase H from Prochlorococcus marinus (strain MIT 9301).